A 404-amino-acid polypeptide reads, in one-letter code: S-adenosylmethionine synthase (404 aa).

H17 provides a ligand contact to ATP. D19 is a binding site for Mg(2+). A K(+)-binding site is contributed by E45. L-methionine contacts are provided by E58 and Q101. A flexible loop region spans residues 101–111; it reads QSPDINRGVDR. Residues 172 to 174, 245 to 246, D254, 260 to 261, A277, and K281 each bind ATP; these read DAK, RF, and RK. Residue D254 coordinates L-methionine. An L-methionine-binding site is contributed by K285.

This sequence belongs to the AdoMet synthase family. As to quaternary structure, homotetramer; dimer of dimers. It depends on Mg(2+) as a cofactor. K(+) is required as a cofactor.

Its subcellular location is the cytoplasm. The enzyme catalyses L-methionine + ATP + H2O = S-adenosyl-L-methionine + phosphate + diphosphate. Its pathway is amino-acid biosynthesis; S-adenosyl-L-methionine biosynthesis; S-adenosyl-L-methionine from L-methionine: step 1/1. In terms of biological role, catalyzes the formation of S-adenosylmethionine (AdoMet) from methionine and ATP. The overall synthetic reaction is composed of two sequential steps, AdoMet formation and the subsequent tripolyphosphate hydrolysis which occurs prior to release of AdoMet from the enzyme. The protein is S-adenosylmethionine synthase of Pelodictyon phaeoclathratiforme (strain DSM 5477 / BU-1).